We begin with the raw amino-acid sequence, 430 residues long: Serine--tRNA ligase (430 aa).

T231–E233 provides a ligand contact to L-serine. R262–E264 contributes to the ATP binding site. E285 contacts L-serine. Position 349 to 352 (E349 to S352) interacts with ATP. Residue S385 participates in L-serine binding.

The protein belongs to the class-II aminoacyl-tRNA synthetase family. Type-1 seryl-tRNA synthetase subfamily. In terms of assembly, homodimer. The tRNA molecule binds across the dimer.

The protein resides in the cytoplasm. It catalyses the reaction tRNA(Ser) + L-serine + ATP = L-seryl-tRNA(Ser) + AMP + diphosphate + H(+). It carries out the reaction tRNA(Sec) + L-serine + ATP = L-seryl-tRNA(Sec) + AMP + diphosphate + H(+). The protein operates within aminoacyl-tRNA biosynthesis; selenocysteinyl-tRNA(Sec) biosynthesis; L-seryl-tRNA(Sec) from L-serine and tRNA(Sec): step 1/1. Catalyzes the attachment of serine to tRNA(Ser). Is also able to aminoacylate tRNA(Sec) with serine, to form the misacylated tRNA L-seryl-tRNA(Sec), which will be further converted into selenocysteinyl-tRNA(Sec). The protein is Serine--tRNA ligase of Ruegeria pomeroyi (strain ATCC 700808 / DSM 15171 / DSS-3) (Silicibacter pomeroyi).